A 570-amino-acid polypeptide reads, in one-letter code: Phosphoenolpyruvate-protein phosphotransferase (570 aa).

The active-site Tele-phosphohistidine intermediate is H189. Residues R296 and R332 each coordinate phosphoenolpyruvate. Residues E431 and D455 each contribute to the Mg(2+) site. Residues N454–D455 and R465 each bind phosphoenolpyruvate. The Proton donor role is filled by C502.

Belongs to the PEP-utilizing enzyme family. As to quaternary structure, homodimer. It depends on Mg(2+) as a cofactor.

Its subcellular location is the cytoplasm. It catalyses the reaction L-histidyl-[protein] + phosphoenolpyruvate = N(pros)-phospho-L-histidyl-[protein] + pyruvate. General (non sugar-specific) component of the phosphoenolpyruvate-dependent sugar phosphotransferase system (sugar PTS). This major carbohydrate active-transport system catalyzes the phosphorylation of incoming sugar substrates concomitantly with their translocation across the cell membrane. Enzyme I transfers the phosphoryl group from phosphoenolpyruvate (PEP) to the phosphoryl carrier protein (HPr). This Buchnera aphidicola subsp. Schizaphis graminum (strain Sg) protein is Phosphoenolpyruvate-protein phosphotransferase (ptsI).